The sequence spans 709 residues: ATP-dependent RNA helicase dbp7 (709 aa).

The interval 13-90 is disordered; that stretch reads DNAQSRKPEA…KPAHELKGNK (78 aa). A compositionally biased stretch (basic and acidic residues) spans 16 to 34; that stretch reads QSRKPEALKSSRRWTDRAR. Positions 44-65 are enriched in polar residues; it reads NESSKSTVKRNSGTNGASTDYK. Residues 66 to 90 show a composition bias toward basic and acidic residues; the sequence is NSQKEKVINPVFDPRKPAHELKGNK. A Q motif motif is present at residues 138 to 167; sequence TNFAGVQLDTQLADHLNNKMNISAPTAIQS. Residues 172-366 enclose the Helicase ATP-binding domain; that stretch reads ALLNTDDKDA…DSALKDALYL (195 aa). ATP is bound at residue 185 to 192; the sequence is AQTGSGKT. The short motif at 301–304 is the DEAD box element; the sequence is DEGD. A Helicase C-terminal domain is found at 404 to 580; sequence LLRSHVRSYK…EQPNGPSGLL (177 aa). A disordered region spans residues 662–690; that stretch reads GKISGANSSKPRKQGGSVDKGKSKSSKDI.

The protein belongs to the DEAD box helicase family. DDX31/DBP7 subfamily.

The protein localises to the nucleus. It is found in the nucleolus. The enzyme catalyses ATP + H2O = ADP + phosphate + H(+). Functionally, ATP-binding RNA helicase involved in the biogenesis of 60S ribosomal subunits and is required for the normal formation of 25S and 5.8S rRNAs. The sequence is that of ATP-dependent RNA helicase dbp7 (dbp7) from Schizosaccharomyces pombe (strain 972 / ATCC 24843) (Fission yeast).